The primary structure comprises 391 residues: 3-ketoacyl-CoA thiolase (391 aa).

The active-site Acyl-thioester intermediate is the Cys-95. Active-site proton acceptor residues include His-347 and Cys-377.

Belongs to the thiolase-like superfamily. Thiolase family. As to quaternary structure, heterotetramer of two alpha chains (FadB) and two beta chains (FadA).

Its subcellular location is the cytoplasm. The enzyme catalyses an acyl-CoA + acetyl-CoA = a 3-oxoacyl-CoA + CoA. Its pathway is lipid metabolism; fatty acid beta-oxidation. Catalyzes the final step of fatty acid oxidation in which acetyl-CoA is released and the CoA ester of a fatty acid two carbons shorter is formed. This Pseudomonas putida (strain ATCC 700007 / DSM 6899 / JCM 31910 / BCRC 17059 / LMG 24140 / F1) protein is 3-ketoacyl-CoA thiolase.